Reading from the N-terminus, the 115-residue chain is UPF0738 protein SSP1780 (115 aa).

Belongs to the UPF0738 family.

The protein is UPF0738 protein SSP1780 of Staphylococcus saprophyticus subsp. saprophyticus (strain ATCC 15305 / DSM 20229 / NCIMB 8711 / NCTC 7292 / S-41).